The chain runs to 528 residues: Sulfhydryl oxidase 1 (528 aa).

Residues 1–19 form the signal peptide; the sequence is MSLIHLFLLLGLLSLEAAA. The Thioredoxin domain occupies 35-170; the sequence is NVADQKDNAI…LLNWINKQIG (136 aa). Asn-47 carries N-linked (GlcNAc...) asparagine glycosylation. Catalysis depends on nucleophile residues Cys-72 and Cys-75. Cys-72 and Cys-75 are disulfide-bonded. 2 N-linked (GlcNAc...) asparagine glycosylation sites follow: Asn-186 and Asn-297. Cys-292 and Cys-304 are disulfide-bonded. The region spanning 295–397 is the ERV/ALR sulfhydryl oxidase domain; sequence SKNETRGFSC…GDPKFPKMIW (103 aa). FAD-binding positions include Arg-300, Trp-307, His-311, Asp-341, His-345, 368–375, Lys-394, and Trp-397; that span reads WSTHNKVN. An intrachain disulfide couples Cys-339 to Cys-342. Cys-403 and Cys-406 are oxidised to a cystine.

FAD serves as cofactor. In terms of tissue distribution, highly expressed in roots.

It is found in the secreted. The protein resides in the cell wall. The enzyme catalyses 2 R'C(R)SH + O2 = R'C(R)S-S(R)CR' + H2O2. In terms of biological role, sulfhydryl oxidase involved in the regulation of cation homeostasis. Positively regulates shoot accumulation of K(+) and inhibits accumulation of toxic cations. Acts at the level of root K(+) efflux systems involved in xylem loading (root symplast-xylem interface). This Arabidopsis thaliana (Mouse-ear cress) protein is Sulfhydryl oxidase 1 (QSOX1).